The sequence spans 266 residues: Putative carbamate hydrolase RutD (266 aa).

The protein belongs to the AB hydrolase superfamily. Hydrolase RutD family.

It carries out the reaction carbamate + 2 H(+) = NH4(+) + CO2. Involved in pyrimidine catabolism. May facilitate the hydrolysis of carbamate, a reaction that can also occur spontaneously. This is Putative carbamate hydrolase RutD from Escherichia coli O127:H6 (strain E2348/69 / EPEC).